The primary structure comprises 264 residues: tRNA pseudouridine synthase A (264 aa).

The Nucleophile role is filled by Asp56. Position 114 (Tyr114) interacts with substrate.

It belongs to the tRNA pseudouridine synthase TruA family. Homodimer.

It carries out the reaction uridine(38/39/40) in tRNA = pseudouridine(38/39/40) in tRNA. In terms of biological role, formation of pseudouridine at positions 38, 39 and 40 in the anticodon stem and loop of transfer RNAs. This is tRNA pseudouridine synthase A from Buchnera aphidicola subsp. Baizongia pistaciae (strain Bp).